The sequence spans 628 residues: Isoleucine--tRNA ligase (628 aa).

Positions 505 to 509 match the 'KMSKS' region motif; it reads KMSKR. Lysine 508 contacts ATP.

The protein belongs to the class-I aminoacyl-tRNA synthetase family.

It catalyses the reaction tRNA(Ile) + L-isoleucine + ATP = L-isoleucyl-tRNA(Ile) + AMP + diphosphate. This is Isoleucine--tRNA ligase from Antonospora locustae (Microsporidian parasite).